Here is a 571-residue protein sequence, read N- to C-terminus: Proline--tRNA ligase (571 aa).

Belongs to the class-II aminoacyl-tRNA synthetase family. ProS type 1 subfamily. Homodimer.

The protein resides in the cytoplasm. It catalyses the reaction tRNA(Pro) + L-proline + ATP = L-prolyl-tRNA(Pro) + AMP + diphosphate. Its function is as follows. Catalyzes the attachment of proline to tRNA(Pro) in a two-step reaction: proline is first activated by ATP to form Pro-AMP and then transferred to the acceptor end of tRNA(Pro). As ProRS can inadvertently accommodate and process non-cognate amino acids such as alanine and cysteine, to avoid such errors it has two additional distinct editing activities against alanine. One activity is designated as 'pretransfer' editing and involves the tRNA(Pro)-independent hydrolysis of activated Ala-AMP. The other activity is designated 'posttransfer' editing and involves deacylation of mischarged Ala-tRNA(Pro). The misacylated Cys-tRNA(Pro) is not edited by ProRS. This is Proline--tRNA ligase from Pasteurella multocida (strain Pm70).